Reading from the N-terminus, the 385-residue chain is MYSTELGINLFGSESNKKIQLNRIKILQKKINNFKIFLVIAGTNTSQIKGISAAGINAKSRRITALADAEFLLKGASKDHKYKLPRLNAGVTPALISHVCSKLINVYPVIVPLGIGVRPYFNHLVVEDRDLGPSNCLTTGKSMTKERVLNLYEKGLAIGKSSKQPILISESVPGGTTTAQAVMEAFGLRVSNLVGSSLFKAPRELRRKVVQKGLLNANLKTDFDSFDVVASVGDPFQAFSMGLLIGARLANQPVILSGGSQMLAVILLVLEFLGEKNKDDFIEDVFIATTGWLVKDNSLNDLLNLINEKYDANLLGLASPLNFQSSIYKELMDYELGHVKEGVGAGGISILAFLNGFKNKEIVSLCQQNLEIMKGLGQISLEKDC.

Belongs to the UPF0284 family.

The sequence is that of UPF0284 protein PMT9312_0438 from Prochlorococcus marinus (strain MIT 9312).